A 255-amino-acid polypeptide reads, in one-letter code: Hydroxyacylglutathione hydrolase (255 aa).

Residues histidine 56, histidine 58, aspartate 60, histidine 61, histidine 114, aspartate 133, and histidine 171 each coordinate Zn(2+).

The protein belongs to the metallo-beta-lactamase superfamily. Glyoxalase II family. As to quaternary structure, monomer. The cofactor is Zn(2+).

The enzyme catalyses an S-(2-hydroxyacyl)glutathione + H2O = a 2-hydroxy carboxylate + glutathione + H(+). The protein operates within secondary metabolite metabolism; methylglyoxal degradation; (R)-lactate from methylglyoxal: step 2/2. In terms of biological role, thiolesterase that catalyzes the hydrolysis of S-D-lactoyl-glutathione to form glutathione and D-lactic acid. The protein is Hydroxyacylglutathione hydrolase of Rhodopseudomonas palustris (strain BisA53).